Reading from the N-terminus, the 440-residue chain is Enolase (440 aa).

Substrate-binding residues include His159 and Glu168. Catalysis depends on Glu211, which acts as the Proton donor. Positions 245, 296, and 321 each coordinate Mg(2+). Residues Glu296 and Asp321 each coordinate substrate. Lys346 (proton acceptor) is an active-site residue. Substrate contacts are provided by residues 373–376 (SHRS) and Lys397.

It belongs to the enolase family. As to quaternary structure, homodimer. Mg(2+) serves as cofactor.

The protein resides in the cytoplasm. The catalysed reaction is (2R)-2-phosphoglycerate = phosphoenolpyruvate + H2O. The protein operates within carbohydrate degradation; glycolysis; pyruvate from D-glyceraldehyde 3-phosphate: step 4/5. The polypeptide is Enolase (eno-1) (Tuber borchii (White truffle)).